The primary structure comprises 340 residues: Ribonucleoside-diphosphate reductase small subunit (340 aa).

A helical membrane pass occupies residues 180–200 (FILMILIEGIFFAASFAAIAY).

This sequence belongs to the ribonucleoside diphosphate reductase small chain family. As to quaternary structure, heterotetramer composed of a homodimer of the large subunit (R1) and a homodimer of the small subunit (R2). Larger multisubunit protein complex are also active, composed of (R1)n(R2)n. The cofactor is Fe cation.

The protein localises to the host membrane. The enzyme catalyses a 2'-deoxyribonucleoside 5'-diphosphate + [thioredoxin]-disulfide + H2O = a ribonucleoside 5'-diphosphate + [thioredoxin]-dithiol. Ribonucleoside-diphosphate reductase holoenzyme provides the precursors necessary for viral DNA synthesis. Allows virus growth in non-dividing cells, as well as reactivation from latency in infected hosts. Catalyzes the biosynthesis of deoxyribonucleotides from the corresponding ribonucleotides. This chain is Ribonucleoside-diphosphate reductase small subunit, found in Human herpesvirus 1 (strain 17) (HHV-1).